The following is a 476-amino-acid chain: Ubiquitin-conjugating enzyme E2 variant 3 (476 aa).

The UEV domain occupies 2–145 (EFSAETLRQQ…EEELPLYSLS (144 aa)). 185-213 (GDMALACLLAVSAKGTAGKLLLLDPTDGE) contacts NAD(+).

In the N-terminal section; belongs to the ubiquitin-conjugating enzyme family. UEV subfamily. The protein in the C-terminal section; belongs to the LDH/MDH superfamily. Homodimer.

Functionally, possible negative regulator of polyubiquitination. The protein is Ubiquitin-conjugating enzyme E2 variant 3 (uevld) of Xenopus tropicalis (Western clawed frog).